Here is a 218-residue protein sequence, read N- to C-terminus: Cell division protein SepF (218 aa).

The disordered stretch occupies residues 20-81 (DDEYYDDRAP…GYRGGYADEP (62 aa)). The segment covering 36–65 (PRFDDDYGRYDGRDYDDARSDSRGDLRGEP) has biased composition (basic and acidic residues).

It belongs to the SepF family. Homodimer. Interacts with FtsZ.

It localises to the cytoplasm. Functionally, cell division protein that is part of the divisome complex and is recruited early to the Z-ring. Probably stimulates Z-ring formation, perhaps through the cross-linking of FtsZ protofilaments. Its function overlaps with FtsA. The sequence is that of Cell division protein SepF from Mycobacterium bovis (strain ATCC BAA-935 / AF2122/97).